The sequence spans 364 residues: Lipid-A-disaccharide synthase (364 aa).

Belongs to the LpxB family.

The enzyme catalyses a lipid X + a UDP-2-N,3-O-bis[(3R)-3-hydroxyacyl]-alpha-D-glucosamine = a lipid A disaccharide + UDP + H(+). It participates in bacterial outer membrane biogenesis; LPS lipid A biosynthesis. Condensation of UDP-2,3-diacylglucosamine and 2,3-diacylglucosamine-1-phosphate to form lipid A disaccharide, a precursor of lipid A, a phosphorylated glycolipid that anchors the lipopolysaccharide to the outer membrane of the cell. The polypeptide is Lipid-A-disaccharide synthase (Campylobacter jejuni (strain RM1221)).